Here is a 597-residue protein sequence, read N- to C-terminus: tRNA uridine 5-carboxymethylaminomethyl modification enzyme MnmG (597 aa).

11 to 16 (GAGHAG) is an FAD binding site. An NAD(+)-binding site is contributed by 275–289 (SPRYCPSIEEKIERY).

It belongs to the MnmG family. As to quaternary structure, homodimer. Heterotetramer of two MnmE and two MnmG subunits. The cofactor is FAD.

The protein resides in the cytoplasm. Its function is as follows. NAD-binding protein involved in the addition of a carboxymethylaminomethyl (cmnm) group at the wobble position (U34) of certain tRNAs, forming tRNA-cmnm(5)s(2)U34. In Endomicrobium trichonymphae, this protein is tRNA uridine 5-carboxymethylaminomethyl modification enzyme MnmG.